A 943-amino-acid polypeptide reads, in one-letter code: Synaptotagmin-like protein 2 (943 aa).

The RabBD domain maps to Met1 to Ala57. 3 disordered regions span residues Arg77–Trp99, Glu118–His291, and Glu361–Gly613. Positions Gln82 to Trp99 are enriched in basic and acidic residues. The span at Ala125–Ser138 shows a compositional bias: low complexity. A compositionally biased stretch (polar residues) spans Ser174–Thr192. Residues Lys194–Ser205 show a composition bias toward basic and acidic residues. 3 stretches are compositionally biased toward polar residues: residues Pro382 to Gln394, Lys404 to Phe416, and Glu426 to Thr440. The span at Glu524–Gln537 shows a compositional bias: basic and acidic residues. The segment covering Ser549–Ser560 has biased composition (polar residues). The span at Ser603–Gly613 shows a compositional bias: low complexity. C2 domains are found at residues Val637–Tyr762 and Asn777–Met906.

In terms of assembly, monomer. Binds NRXN1. Binds RAB27A that has been activated by GTP-binding via its N-terminus. Interacts with RAB27B.

The protein localises to the cell membrane. May act as a RAB27A effector protein and play a role in cytotoxic granule exocytosis in lymphocytes. The polypeptide is Synaptotagmin-like protein 2 (SYTL2) (Bos taurus (Bovine)).